The sequence spans 178 residues: Nicotinamide-nucleotide adenylyltransferase (178 aa).

This sequence belongs to the archaeal NMN adenylyltransferase family.

The protein resides in the cytoplasm. The catalysed reaction is beta-nicotinamide D-ribonucleotide + ATP + H(+) = diphosphate + NAD(+). It participates in cofactor biosynthesis; NAD(+) biosynthesis; NAD(+) from nicotinamide D-ribonucleotide: step 1/1. The polypeptide is Nicotinamide-nucleotide adenylyltransferase (Thermoplasma volcanium (strain ATCC 51530 / DSM 4299 / JCM 9571 / NBRC 15438 / GSS1)).